We begin with the raw amino-acid sequence, 222 residues long: Ribonuclease HII (222 aa).

The region spanning 32–222 (FHIAGVDEVG…LIKRYKEDIS (191 aa)) is the RNase H type-2 domain. A divalent metal cation is bound by residues Asp38, Glu39, and Asp130.

The protein belongs to the RNase HII family. Mn(2+) is required as a cofactor. It depends on Mg(2+) as a cofactor.

It is found in the cytoplasm. It catalyses the reaction Endonucleolytic cleavage to 5'-phosphomonoester.. Endonuclease that specifically degrades the RNA of RNA-DNA hybrids. In Bartonella bacilliformis (strain ATCC 35685 / KC583 / Herrer 020/F12,63), this protein is Ribonuclease HII.